A 131-amino-acid chain; its full sequence is Large ribosomal subunit protein bL17 (131 aa).

It belongs to the bacterial ribosomal protein bL17 family. As to quaternary structure, part of the 50S ribosomal subunit. Contacts protein L32.

This is Large ribosomal subunit protein bL17 from Bordetella petrii (strain ATCC BAA-461 / DSM 12804 / CCUG 43448).